The sequence spans 242 residues: Biosynthetic peptidoglycan transglycosylase (242 aa).

A helical membrane pass occupies residues 19–39 (LMVVLAVFWGGGIALFSVAPV).

The protein belongs to the glycosyltransferase 51 family.

The protein localises to the cell inner membrane. It catalyses the reaction [GlcNAc-(1-&gt;4)-Mur2Ac(oyl-L-Ala-gamma-D-Glu-L-Lys-D-Ala-D-Ala)](n)-di-trans,octa-cis-undecaprenyl diphosphate + beta-D-GlcNAc-(1-&gt;4)-Mur2Ac(oyl-L-Ala-gamma-D-Glu-L-Lys-D-Ala-D-Ala)-di-trans,octa-cis-undecaprenyl diphosphate = [GlcNAc-(1-&gt;4)-Mur2Ac(oyl-L-Ala-gamma-D-Glu-L-Lys-D-Ala-D-Ala)](n+1)-di-trans,octa-cis-undecaprenyl diphosphate + di-trans,octa-cis-undecaprenyl diphosphate + H(+). The protein operates within cell wall biogenesis; peptidoglycan biosynthesis. Peptidoglycan polymerase that catalyzes glycan chain elongation from lipid-linked precursors. The polypeptide is Biosynthetic peptidoglycan transglycosylase (Escherichia coli (strain ATCC 8739 / DSM 1576 / NBRC 3972 / NCIMB 8545 / WDCM 00012 / Crooks)).